Consider the following 334-residue polypeptide: Procathepsin L (334 aa).

A signal peptide spans 1 to 17 (MTPLLLLAVLCLGTALA). Positions 18–113 (TPKFDQTFNA…RLFQEPLMLQ (96 aa)) are cleaved as a propeptide — activation peptide. E122 contributes to the Zn(2+) binding site. Intrachain disulfides connect C135/C178 and C169/C211. The active site involves C138. Positions 163, 184, 199, 205, 227, 250, 253, 273, and 275 each coordinate Zn(2+). The cysteines at positions 269 and 322 are disulfide-linked. The active site involves H276. The propeptide occupies 289 to 290 (DS). N300 is a catalytic residue.

It belongs to the peptidase C1 family. In terms of assembly, dimer of a heavy and a light chain linked by disulfide bonds. Interacts with Long isoform of CD74/Ii chain; the interaction stabilizes the conformation of mature CTSL. Post-translationally, during export along the endocytic pathway, pro-CTSL undergoes several proteolytic cleavages to generate the CTSL single-chain and two-chain mature forms, composed of a heavy chain linked to a light chain by disulfide bonds. Autocleavage; produces the single-chain CTSL after cleavage of the propeptide. The cleavage can be intermolecular. In terms of tissue distribution, both mature cathepsin L1 and procathepsin L are found in the upper epidermis. The lower epidermis predominantly contains procathepsin L. In seminiferous tubules expression is greater at stages VI-VII than at stages IX-XII.

It localises to the lysosome. The protein localises to the apical cell membrane. It is found in the cytoplasmic vesicle. The protein resides in the secretory vesicle. Its subcellular location is the chromaffin granule. It localises to the secreted. The protein localises to the extracellular space. It catalyses the reaction Specificity close to that of papain. As compared to cathepsin B, cathepsin L exhibits higher activity toward protein substrates, but has little activity on Z-Arg-Arg-NHMec, and no peptidyl-dipeptidase activity.. Inhibited by the propeptide produced by autocleavage. Long isoform of CD74/Ii chain stabilizes the conformation of mature CTSL by binding to its active site and serving as a chaperone to help maintain a pool of mature enzyme in endocytic compartments and extracellular space of APCs. IFNG enhances the conversion into the CTSL mature and active form. Inhibited by CST6. Inhibited by the glycopeptide antibiotic teicoplanin. Inhibited by amantadine. Its function is as follows. Thiol protease important for the overall degradation of proteins in lysosomes. Plays a critical for normal cellular functions such as general protein turnover, antigen processing and bone remodeling. Involved in the solubilization of cross-linked TG/thyroglobulin and in the subsequent release of thyroid hormone thyroxine (T4) by limited proteolysis of TG/thyroglobulin in the thyroid follicle lumen. In neuroendocrine chromaffin cells secretory vesicles, catalyzes the prohormone proenkephalin processing to the active enkephalin peptide neurotransmitter. In thymus, regulates CD4(+) T cell positive selection by generating the major histocompatibility complex class II (MHCII) bound peptide ligands presented by cortical thymic epithelial cells. Also mediates invariant chain processing in cortical thymic epithelial cells. Major elastin-degrading enzyme at neutral pH. Accumulates as a mature and active enzyme in the extracellular space of antigen presenting cells (APCs) to regulate degradation of the extracellular matrix in the course of inflammation. Secreted form generates endostatin from COL18A1. Critical for cardiac morphology and function. Plays an important role in hair follicle morphogenesis and cycling, as well as epidermal differentiation. Required for maximal stimulation of steroidogenesis by TIMP1. The protein is Procathepsin L of Rattus norvegicus (Rat).